We begin with the raw amino-acid sequence, 455 residues long: mRNA cleavage and polyadenylation factor CLP1 (455 aa).

ATP contacts are provided by glutamate 28 and lysine 67. Residues 112–131 are disordered; it reads EAAARNNGGGRSAPHGPRVL. Position 137–142 (137–142) interacts with ATP; the sequence is GCGRTS.

The protein belongs to the Clp1 family. Clp1 subfamily. In terms of assembly, component of a pre-mRNA cleavage factor complex. Interacts directly with PCF11.

Its subcellular location is the nucleus. Its function is as follows. Required for endonucleolytic cleavage during polyadenylation-dependent pre-mRNA 3'-end formation. The polypeptide is mRNA cleavage and polyadenylation factor CLP1 (Pyricularia oryzae (strain 70-15 / ATCC MYA-4617 / FGSC 8958) (Rice blast fungus)).